A 383-amino-acid chain; its full sequence is UDP-N-acetylglucosamine--N-acetylmuramyl-(pentapeptide) pyrophosphoryl-undecaprenol N-acetylglucosamine transferase (383 aa).

UDP-N-acetyl-alpha-D-glucosamine is bound by residues 10–12, asparagine 124, arginine 165, serine 190, isoleucine 245, and glutamine 290; that span reads TGG. The disordered stretch occupies residues 364 to 383; that stretch reads PFGQAREPGQKPARPPDLAS.

The protein belongs to the glycosyltransferase 28 family. MurG subfamily.

It localises to the cell inner membrane. The enzyme catalyses di-trans,octa-cis-undecaprenyl diphospho-N-acetyl-alpha-D-muramoyl-L-alanyl-D-glutamyl-meso-2,6-diaminopimeloyl-D-alanyl-D-alanine + UDP-N-acetyl-alpha-D-glucosamine = di-trans,octa-cis-undecaprenyl diphospho-[N-acetyl-alpha-D-glucosaminyl-(1-&gt;4)]-N-acetyl-alpha-D-muramoyl-L-alanyl-D-glutamyl-meso-2,6-diaminopimeloyl-D-alanyl-D-alanine + UDP + H(+). It functions in the pathway cell wall biogenesis; peptidoglycan biosynthesis. Functionally, cell wall formation. Catalyzes the transfer of a GlcNAc subunit on undecaprenyl-pyrophosphoryl-MurNAc-pentapeptide (lipid intermediate I) to form undecaprenyl-pyrophosphoryl-MurNAc-(pentapeptide)GlcNAc (lipid intermediate II). The protein is UDP-N-acetylglucosamine--N-acetylmuramyl-(pentapeptide) pyrophosphoryl-undecaprenol N-acetylglucosamine transferase of Anaeromyxobacter dehalogenans (strain 2CP-C).